The primary structure comprises 224 residues: UPF0758 protein XF_0148 (224 aa).

One can recognise an MPN domain in the interval 102–224; sequence SIHDPISAGR…PVSFAEHGWL (123 aa). Positions 173, 175, and 186 each coordinate Zn(2+). The short motif at 173 to 186 is the JAMM motif element; it reads HNHPSGNREPSPAD.

Belongs to the UPF0758 family.

The polypeptide is UPF0758 protein XF_0148 (Xylella fastidiosa (strain 9a5c)).